The chain runs to 240 residues: 7-cyano-7-deazaguanine synthase (240 aa).

Position 18 to 28 (18 to 28 (FSGGQDSTTCL)) interacts with ATP. C197, C206, C209, and C212 together coordinate Zn(2+).

Belongs to the QueC family. Requires Zn(2+) as cofactor.

It catalyses the reaction 7-carboxy-7-deazaguanine + NH4(+) + ATP = 7-cyano-7-deazaguanine + ADP + phosphate + H2O + H(+). Its pathway is purine metabolism; 7-cyano-7-deazaguanine biosynthesis. Functionally, catalyzes the ATP-dependent conversion of 7-carboxy-7-deazaguanine (CDG) to 7-cyano-7-deazaguanine (preQ(0)). The polypeptide is 7-cyano-7-deazaguanine synthase (Shewanella baltica (strain OS223)).